The sequence spans 620 residues: Methionine--tRNA ligase (620 aa).

The 'HIGH' region motif lies at proline 11–histidine 21. Zn(2+)-binding residues include cysteine 143, cysteine 146, cysteine 156, and cysteine 159. Positions lysine 347–serine 351 match the 'KMSKS' region motif. An ATP-binding site is contributed by serine 350.

Belongs to the class-I aminoacyl-tRNA synthetase family. MetG type 1 subfamily. Monomer. Requires Zn(2+) as cofactor.

The protein resides in the cytoplasm. The catalysed reaction is tRNA(Met) + L-methionine + ATP = L-methionyl-tRNA(Met) + AMP + diphosphate. Functionally, is required not only for elongation of protein synthesis but also for the initiation of all mRNA translation through initiator tRNA(fMet) aminoacylation. The protein is Methionine--tRNA ligase of Bifidobacterium adolescentis (strain ATCC 15703 / DSM 20083 / NCTC 11814 / E194a).